A 396-amino-acid polypeptide reads, in one-letter code: Elongation factor Tu (396 aa).

One can recognise a tr-type G domain in the interval 10 to 206 (KPHCNIGTIG…AVDAYIPQPE (197 aa)). Residues 19–26 (GHVDHGKT) are G1. 19 to 26 (GHVDHGKT) contacts GTP. Mg(2+) is bound at residue Thr-26. The segment at 60-64 (GITIS) is G2. A G3 region spans residues 81–84 (DCPG). Residues 81–85 (DCPGH) and 136–139 (NKCD) each bind GTP. The segment at 136 to 139 (NKCD) is G4. Positions 174-176 (SAL) are G5.

The protein belongs to the TRAFAC class translation factor GTPase superfamily. Classic translation factor GTPase family. EF-Tu/EF-1A subfamily. In terms of assembly, monomer.

Its subcellular location is the cytoplasm. The enzyme catalyses GTP + H2O = GDP + phosphate + H(+). Its function is as follows. GTP hydrolase that promotes the GTP-dependent binding of aminoacyl-tRNA to the A-site of ribosomes during protein biosynthesis. This Rhodopseudomonas palustris (strain BisB18) protein is Elongation factor Tu.